A 68-amino-acid chain; its full sequence is Large ribosomal subunit protein eL24 (68 aa).

Cys7, Cys10, Cys33, and Cys37 together coordinate Zn(2+). Residues 7–37 form a C4-type zinc finger; it reads CDFCGRIIEPGTGKMFVKNDGTILWFCSSKC.

The protein belongs to the eukaryotic ribosomal protein eL24 family. Part of the 50S ribosomal subunit. Forms a cluster with proteins L3 and L14. Requires Zn(2+) as cofactor.

Its function is as follows. Binds to the 23S rRNA. This chain is Large ribosomal subunit protein eL24, found in Methanopyrus kandleri (strain AV19 / DSM 6324 / JCM 9639 / NBRC 100938).